Reading from the N-terminus, the 571-residue chain is Proline-rich protein 35 (571 aa).

Disordered regions lie at residues 1 to 27 (MSRE…PHYI), 79 to 187 (GSTT…EGSV), 286 to 402 (APVS…GSPE), and 476 to 571 (GPQA…GAEV). The segment covering 16 to 26 (ARSRKPKKPHY) has biased composition (basic residues). A compositionally biased stretch (gly residues) spans 165–175 (GMGGDPRGVGA). Over residues 316–336 (TPRDPGQEGELERAAQSDPRR) the composition is skewed to basic and acidic residues. Positions 351–367 (PSLTRFCSRSSLPTGSS) are enriched in polar residues. Residues 380 to 399 (PETPGPEGPLPLQPRGPVPG) are compositionally biased toward pro residues.

In Homo sapiens (Human), this protein is Proline-rich protein 35 (PRR35).